The following is a 334-amino-acid chain: Thioredoxin reductase (334 aa).

FAD contacts are provided by residues 11–14, 40–41, Q45, N54, C148, D294, and 301–303; these read SGAG, TA, and RQA. C145 and C148 are oxidised to a cystine.

Belongs to the class-II pyridine nucleotide-disulfide oxidoreductase family. In terms of assembly, homodimer. FAD serves as cofactor.

The catalysed reaction is [thioredoxin]-dithiol + NADP(+) = [thioredoxin]-disulfide + NADPH + H(+). In terms of biological role, component of the thioredoxin-thioredoxin reductase system which may be involved in biosynthesis of penicillins and cephalosporins and may be important in determining the thiol-disulfide redox balance. In Penicillium chrysogenum (Penicillium notatum), this protein is Thioredoxin reductase (TRR1).